Reading from the N-terminus, the 266-residue chain is Glucosamine-6-phosphate deaminase (266 aa).

Asp72 acts as the Proton acceptor; for enolization step in catalysis. Residue Asp141 is the For ring-opening step of the active site. Residue His143 is the Proton acceptor; for ring-opening step of the active site. Glu148 serves as the catalytic For ring-opening step.

Belongs to the glucosamine/galactosamine-6-phosphate isomerase family. NagB subfamily. In terms of assembly, homohexamer.

It carries out the reaction alpha-D-glucosamine 6-phosphate + H2O = beta-D-fructose 6-phosphate + NH4(+). It functions in the pathway amino-sugar metabolism; N-acetylneuraminate degradation; D-fructose 6-phosphate from N-acetylneuraminate: step 5/5. Its activity is regulated as follows. Allosterically activated by N-acetylglucosamine 6-phosphate (GlcNAc6P). In terms of biological role, catalyzes the reversible isomerization-deamination of glucosamine 6-phosphate (GlcN6P) to form fructose 6-phosphate (Fru6P) and ammonium ion. The protein is Glucosamine-6-phosphate deaminase of Aliivibrio salmonicida (strain LFI1238) (Vibrio salmonicida (strain LFI1238)).